Here is a 407-residue protein sequence, read N- to C-terminus: Serine/threonine transporter SstT (407 aa).

Helical transmembrane passes span 12–32 (GNLI…GISS), 42–62 (LGIL…FILI), 81–101 (IIIL…LANF), 141–161 (ALSS…GIAL), 179–199 (VLKI…GLVA), 218–238 (ILLV…IVFF), 245–267 (FPLI…SSAA), 288–308 (ISIP…IAIL), and 330–350 (IIAT…LLLI).

The protein belongs to the dicarboxylate/amino acid:cation symporter (DAACS) (TC 2.A.23) family.

It is found in the cell inner membrane. It carries out the reaction L-serine(in) + Na(+)(in) = L-serine(out) + Na(+)(out). It catalyses the reaction L-threonine(in) + Na(+)(in) = L-threonine(out) + Na(+)(out). Its function is as follows. Involved in the import of serine and threonine into the cell, with the concomitant import of sodium (symport system). This is Serine/threonine transporter SstT from Campylobacter jejuni subsp. jejuni serotype O:2 (strain ATCC 700819 / NCTC 11168).